The sequence spans 736 residues: 1,4-alpha-glucan branching enzyme GlgB (736 aa).

The active-site Nucleophile is the D415. The active-site Proton donor is E470.

Belongs to the glycosyl hydrolase 13 family. GlgB subfamily. In terms of assembly, monomer.

It carries out the reaction Transfers a segment of a (1-&gt;4)-alpha-D-glucan chain to a primary hydroxy group in a similar glucan chain.. It functions in the pathway glycan biosynthesis; glycogen biosynthesis. Functionally, catalyzes the formation of the alpha-1,6-glucosidic linkages in glycogen by scission of a 1,4-alpha-linked oligosaccharide from growing alpha-1,4-glucan chains and the subsequent attachment of the oligosaccharide to the alpha-1,6 position. The sequence is that of 1,4-alpha-glucan branching enzyme GlgB from Burkholderia cenocepacia (strain HI2424).